We begin with the raw amino-acid sequence, 565 residues long: Perivitellin-2 67 kDa subunit (565 aa).

The first 26 residues, 1-26 (MSQLRWWVVSQVLLLIAICSLDHSEG), serve as a signal peptide directing secretion. Positions 27–340 (ARVCPKIVPG…AKVANLDRLT (314 aa)) constitute an MACPF domain. The tract at residues 387–565 (VPAWFSDRTT…CGMSWALIAK (179 aa)) is invertebrate MACPF Accessory Domain (IMAD).

In terms of assembly, perivitellin-2 is a dimer of heterodimers held together head-to-tail by non-covalent forces. The heterodimer is composed of the tachylectin subunit (31 kDa) and the MACPF subunit (67 kDa) that are disulfide-linked. In terms of processing, PV2 is a very high density lipoprotein (VHDL). It contains 3.75% of lipids. The major lipid classes are free sterols and phospholipids and also have significant quantities of energy-providing triacylglycerides and free fatty acids. In terms of tissue distribution, produced by albumen secretory cells. Found in developing eggs.

The protein resides in the secreted. It is found in the target cell membrane. In terms of biological role, the egg defensive protein perivitellin-2 is a pore-forming two-subunit glycoprotein that affects both the nervous and digestive systems of mammals. In addition, it is a source of both structural and energetic molecules during embryonic development. The tachylectin subunit (31 kDa) binds target membranes while the MACPF subunit (67 kDa) disrupts lipid bilayers forming large pores (inner diameter of about 5.6 nm) altering the plasma membrance conductance. Both in vivo and in vitro, the protein shows wide pH range stability and is resistant to enzymatic proteolysis from gastrointestinal environments. It is cytotoxic to both epithelial and immune cells from the digestive system of mammals. It induces enterocyte death by a lytic mechanism and disrupts enterocyte monolayers in a dose-dependent manner. After oral administration to mice, it binds enterocytes and induces large dose-dependent morphological changes on their small intestine mucosa, reducing the absorptive surface. Additionally, it is detected in the Peyer's patches where it activates lymphoid follicles and triggers apoptosis. The toxin can also traverse the intestinal barrier and induce oral adaptive immunity with evidence of circulating antibody response. The toxin also shows hemagglutination properties thanks to the tachylectin subunit, but has no hemolytic activity. In addition to enterotoxin activity, the toxin also acts as a neurotoxin, since an intraperitoneal injection can induce paralysis of the mice rear limbs, followed by death. The polypeptide is Perivitellin-2 67 kDa subunit (Pomacea maculata (Giant applesnail)).